A 629-amino-acid polypeptide reads, in one-letter code: MSPVSVISLPSDLCLPTSFIDRSGRELIPLHITIPNVAMRRQGKLMTRASMSMNLRTAVSDDAVIRRRGDFHSNLWDDDLIQSLSSPYGEPSYRERAERLIGEVKNSFNSMSNEDGESITPLDDLIQRLWMVDSVERLGIDRHFKKEIKSALDHVYRYWSEKGIGCGRESVVTDLNSTALGLRTLRLHGYDVSADVLNHFKNQSGQFACTLKQTEDQIRTVLNLYRASLIAFPGEKVMDEAESFSAKYLKEALQKIPVSSFSREIGDVLEYGWHTYLPRLEARNYIDVFGQDTENSKSYMKTEKLLELAKLEFNIFHALQKRELEYLVRWWKGSGSPQMTFCRHRHVEYYTLASCIAFEPQHSGFRLGFAKACHIITVLDDMYDTFGTLDELELFTSAIKRWDPSATECLPEYMKGVYMIVYNTVNEMSQEADKAQGRDTLNYCRQAWEEYIDAYMQEAKWIASGEVPTFEEYYENGKVSSGHRVSALQPILTTDIPFPEHVLKEVDIPSQLNDLASAILRLRGDTRCYQADRARGEEASCISCYMKDNPGTTEEDALNHLNAMISDVIKGLNWELLKPNSSVPISAKKHAFDISRAFHCGYKYRDGYSVANIETKSLVKRTVIDPVTL.

Residues 1 to 48 (MSPVSVISLPSDLCLPTSFIDRSGRELIPLHITIPNVAMRRQGKLMTR) constitute a chloroplast transit peptide. Mg(2+)-binding residues include D380, D384, and D532. The DDXXD motif signature appears at 380-384 (DDMYD). Residue S540 coordinates K(+).

It belongs to the terpene synthase family. Tpsd subfamily. It depends on Mg(2+) as a cofactor. Mn(2+) is required as a cofactor. The cofactor is K(+).

Its subcellular location is the plastid. The protein resides in the chloroplast. The enzyme catalyses (2E)-geranyl diphosphate = (1S,5S)-alpha-pinene + diphosphate. The protein operates within terpene metabolism; oleoresin biosynthesis. In terms of biological role, involved in defensive oleoresin formation in conifers in response to insect attack or other injury. Involved in monoterpene (C10) olefins biosynthesis. Produces mainly (-)-alpha-pinene (79%) and lesser amounts of (-)-beta-pinene (4.2%), nearly racemic mixtures of camphene (2.8% (+)/2.2% (-)) and limonene (2.4% (+)/3.7% (-)), as well as small amounts of (+)-alpha-pinene (3.3%) and (+)-beta-pinene (2.4%). The chain is (-)-alpha-pinene synthase, chloroplastic (PT1) from Pinus taeda (Loblolly pine).